The sequence spans 354 residues: Photosystem II protein D1 (354 aa).

Threonine 2 is subject to N-acetylthreonine. Threonine 2 bears the Phosphothreonine mark. 3 helical membrane-spanning segments follow: residues 29-46 (YIGW…TATS), 118-133 (HFLL…EWEL), and 142-156 (WIAV…AATA). Histidine 118 serves as a coordination point for chlorophyll a. A pheophytin a-binding site is contributed by tyrosine 126. Positions 170 and 189 each coordinate [CaMn4O5] cluster. The helical transmembrane segment at 197 to 218 (FHMLGVAGVFGGSLFSAMHGSL) threads the bilayer. Histidine 198 is a binding site for chlorophyll a. Residues histidine 215 and 264–265 (SF) contribute to the a quinone site. Histidine 215 contacts Fe cation. Histidine 272 contributes to the Fe cation binding site. The chain crosses the membrane as a helical span at residues 274–288 (FLAAWPVVGIWFTAL). Residues histidine 332, glutamate 333, aspartate 342, and alanine 344 each coordinate [CaMn4O5] cluster. Residues 345 to 354 (ASIEAPSLNG) constitute a propeptide that is removed on maturation.

The protein belongs to the reaction center PufL/M/PsbA/D family. PSII is composed of 1 copy each of membrane proteins PsbA, PsbB, PsbC, PsbD, PsbE, PsbF, PsbH, PsbI, PsbJ, PsbK, PsbL, PsbM, PsbT, PsbX, PsbY, PsbZ, Psb30/Ycf12, at least 3 peripheral proteins of the oxygen-evolving complex and a large number of cofactors. It forms dimeric complexes. The D1/D2 heterodimer binds P680, chlorophylls that are the primary electron donor of PSII, and subsequent electron acceptors. It shares a non-heme iron and each subunit binds pheophytin, quinone, additional chlorophylls, carotenoids and lipids. D1 provides most of the ligands for the Mn4-Ca-O5 cluster of the oxygen-evolving complex (OEC). There is also a Cl(-1) ion associated with D1 and D2, which is required for oxygen evolution. The PSII complex binds additional chlorophylls, carotenoids and specific lipids. is required as a cofactor. Tyr-161 forms a radical intermediate that is referred to as redox-active TyrZ, YZ or Y-Z. Post-translationally, C-terminally processed by CTPA; processing is essential to allow assembly of the oxygen-evolving complex and thus photosynthetic growth.

Its subcellular location is the plastid. The protein localises to the chloroplast thylakoid membrane. The enzyme catalyses 2 a plastoquinone + 4 hnu + 2 H2O = 2 a plastoquinol + O2. In terms of biological role, photosystem II (PSII) is a light-driven water:plastoquinone oxidoreductase that uses light energy to abstract electrons from H(2)O, generating O(2) and a proton gradient subsequently used for ATP formation. It consists of a core antenna complex that captures photons, and an electron transfer chain that converts photonic excitation into a charge separation. The D1/D2 (PsbA/PsbD) reaction center heterodimer binds P680, the primary electron donor of PSII as well as several subsequent electron acceptors. The sequence is that of Photosystem II protein D1 from Selaginella uncinata (Blue spike-moss).